A 563-amino-acid chain; its full sequence is Arginine--tRNA ligase (563 aa).

The short motif at 122–132 (PNIAKPMSMGH) is the 'HIGH' region element.

It belongs to the class-I aminoacyl-tRNA synthetase family. In terms of assembly, monomer.

It localises to the cytoplasm. It catalyses the reaction tRNA(Arg) + L-arginine + ATP = L-arginyl-tRNA(Arg) + AMP + diphosphate. This Ligilactobacillus salivarius (strain UCC118) (Lactobacillus salivarius) protein is Arginine--tRNA ligase.